The chain runs to 746 residues: Bud site selection protein 7 (746 aa).

Positions 733–746 (LNFFTTCTIGCYDA) are CHS5-binding.

It belongs to the CHAPS family. In terms of assembly, component of the CHS5/6 complex composed of the 4 CHAPS proteins BCH1, BCH2v, BUD7, and CHS6 as well as at least CHS5 and GTP-bound ARF1. The complex interacts with the cargo protein CHS3.

It is found in the golgi apparatus. It localises to the trans-Golgi network membrane. Member of the CHS5-ARF1P-binding proteins (CHAPS) which mediates export of specific cargo proteins, including chitin synthase CHS3. May be involved in positioning the proximal bud pole signal. This is Bud site selection protein 7 (BUD7) from Saccharomyces cerevisiae (strain ATCC 204508 / S288c) (Baker's yeast).